Here is a 460-residue protein sequence, read N- to C-terminus: Methylenetetrahydrofolate--tRNA-(uracil-5-)-methyltransferase TrmFO (460 aa).

12-17 is a binding site for FAD; that stretch reads GGGLAG.

The protein belongs to the MnmG family. TrmFO subfamily. Requires FAD as cofactor.

It localises to the cytoplasm. It carries out the reaction uridine(54) in tRNA + (6R)-5,10-methylene-5,6,7,8-tetrahydrofolate + NADH + H(+) = 5-methyluridine(54) in tRNA + (6S)-5,6,7,8-tetrahydrofolate + NAD(+). The enzyme catalyses uridine(54) in tRNA + (6R)-5,10-methylene-5,6,7,8-tetrahydrofolate + NADPH + H(+) = 5-methyluridine(54) in tRNA + (6S)-5,6,7,8-tetrahydrofolate + NADP(+). Functionally, catalyzes the folate-dependent formation of 5-methyl-uridine at position 54 (M-5-U54) in all tRNAs. This Crocosphaera subtropica (strain ATCC 51142 / BH68) (Cyanothece sp. (strain ATCC 51142)) protein is Methylenetetrahydrofolate--tRNA-(uracil-5-)-methyltransferase TrmFO.